Consider the following 364-residue polypeptide: Methylthioribose-1-phosphate isomerase (364 aa).

D254 functions as the Proton donor in the catalytic mechanism.

It belongs to the eIF-2B alpha/beta/delta subunits family. MtnA subfamily.

Its subcellular location is the cytoplasm. The protein localises to the nucleus. The catalysed reaction is 5-(methylsulfanyl)-alpha-D-ribose 1-phosphate = 5-(methylsulfanyl)-D-ribulose 1-phosphate. Its pathway is amino-acid biosynthesis; L-methionine biosynthesis via salvage pathway; L-methionine from S-methyl-5-thio-alpha-D-ribose 1-phosphate: step 1/6. In terms of biological role, catalyzes the interconversion of methylthioribose-1-phosphate (MTR-1-P) into methylthioribulose-1-phosphate (MTRu-1-P). The sequence is that of Methylthioribose-1-phosphate isomerase from Drosophila yakuba (Fruit fly).